The chain runs to 1248 residues: Reverse gyrase 1 (1248 aa).

An RG N-terminal-type zinc finger spans residues 7 to 44; it reads IPPSIYLFSCPNCGRSISTYRLLLGSVCNICLEEDKEY. The Zn(2+) site is built by C16, C19, C34, and C37. Residues Q92 and 109 to 116 each bind ATP; that span reads APPGLGKT. The Helicase ATP-binding domain occupies 96 to 262; it reads IYRLLSGESF…KKYRENTQKN (167 aa). Positions 219 to 222 match the DEAD box motif; sequence DDVD. Residues 621-1248 form a topoisomerase I region; that stretch reads QKVKTVLLVV…QVYEEINEIR (628 aa). The 165-residue stretch at 625 to 789 folds into the Toprim domain; that stretch reads TVLLVVESPN…NIRRAEFHEV (165 aa). Residue E631 coordinates Mg(2+). The RG C-terminal-type; atypical zinc finger occupies 706-735; sequence IKKCENNHQFTDFFESNKCPRCMTTKVRYD. The Zn(2+) site is built by C709, H713, C724, and C727. D758 contributes to the Mg(2+) binding site. A Topo IA-type catalytic domain is found at 805 to 1248; it reads NVNLVKSQLV…QVYEEINEIR (444 aa). Catalysis depends on Y965, which acts as the O-(5'-phospho-DNA)-tyrosine intermediate.

It in the N-terminal section; belongs to the DEAD box helicase family. DDVD subfamily. This sequence in the C-terminal section; belongs to the type IA topoisomerase family. Monomer. It depends on Zn(2+) as a cofactor. Requires Mg(2+) as cofactor. Post-translationally, the N-terminus is blocked.

It is found in the cytoplasm. The enzyme catalyses ATP + H2O = ADP + phosphate + H(+). Functionally, modifies the topological state of DNA by introducing positive supercoils in an ATP-dependent process. Increases the linking number in steps of +1. Has a DNA-stimulated ATPase activity; closed circular ssDNA stimulates ATPase much better than dsDNA although negative supercoiled, positive supercoiled and relaxed dsDNA all stimulate ATPase activity. All NTPs permit topoisomerization (relaxation) of negatively supercoiled dsDNA without nucleotide hydrolysis. It transiently cleaves a single DNA strand and remains covalently bound to the 5' DNA end. Acts via a tyrosine residue. Reverse gyrase binds and unwinds DNA independently of ATP binding and DNA cleavage. May be involved in rewinding the DNA strands in the regions of the chromosome that have opened up to allow transcription or replication, probably acts via ssDNA regions of the chromosome. This is Reverse gyrase 1 from Sulfolobus acidocaldarius (strain ATCC 33909 / DSM 639 / JCM 8929 / NBRC 15157 / NCIMB 11770).